The primary structure comprises 111 residues: Large ribosomal subunit protein uL22 (111 aa).

The protein belongs to the universal ribosomal protein uL22 family. Part of the 50S ribosomal subunit.

In terms of biological role, this protein binds specifically to 23S rRNA; its binding is stimulated by other ribosomal proteins, e.g. L4, L17, and L20. It is important during the early stages of 50S assembly. It makes multiple contacts with different domains of the 23S rRNA in the assembled 50S subunit and ribosome. The globular domain of the protein is located near the polypeptide exit tunnel on the outside of the subunit, while an extended beta-hairpin is found that lines the wall of the exit tunnel in the center of the 70S ribosome. This chain is Large ribosomal subunit protein uL22, found in Francisella tularensis subsp. tularensis (strain FSC 198).